The primary structure comprises 173 residues: Photosystem I assembly protein Ycf3 (173 aa).

TPR repeat units lie at residues A35–A68, G72–Q105, and G120–G153.

Belongs to the Ycf3 family.

The protein localises to the cellular thylakoid membrane. Its function is as follows. Essential for the assembly of the photosystem I (PSI) complex. May act as a chaperone-like factor to guide the assembly of the PSI subunits. The polypeptide is Photosystem I assembly protein Ycf3 (Synechococcus sp. (strain CC9311)).